The following is a 544-amino-acid chain: Spore germination protein KA (544 aa).

The tract at residues 1-36 (MPLFSKRKNNTDSKDKQNTDERNQEQQQEKERPVLI) is disordered. The span at 9 to 33 (NNTDSKDKQNTDERNQEQQQEKERP) shows a compositional bias: basic and acidic residues. Helical transmembrane passes span 279–299 (FAII…FVQF), 321–341 (VLVF…TTFH), 392–412 (AVSI…GIVS), 416–436 (VIIV…AMAI), and 443–463 (FIFI…GIIM). The span at 504 to 523 (KRPESVSKEDKVRQGKDQRP) shows a compositional bias: basic and acidic residues. Residues 504–544 (KRPESVSKEDKVRQGKDQRPEPAASRGMVNKDLEEGDQNGT) are disordered.

This sequence belongs to the GerABKA family.

The protein localises to the cell membrane. Its function is as follows. Involved in the germination response to the combination of glucose, fructose, L-asparagine, and KCl. The polypeptide is Spore germination protein KA (gerKA) (Bacillus subtilis (strain 168)).